A 550-amino-acid chain; its full sequence is Tether containing UBX domain for GLUT4 (550 aa).

A2 carries the post-translational modification N-acetylalanine. The disordered stretch occupies residues 185–320; that stretch reads AVRSKAPGSP…EPPVDRDPVV (136 aa). S193 carries the post-translational modification Phosphoserine. Over residues 193–206 the composition is skewed to low complexity; sequence SPVSSLSADQASSS. Residues 217–226 are compositionally biased toward basic and acidic residues; sequence SRGDLNHEGD. The span at 242–252 shows a compositional bias: polar residues; that stretch reads DAQTKQSTSEP. The interval 313–376 is interaction with GLUT4; it reads PVDRDPVVYH…LVTKAFREAQ (64 aa). One can recognise a UBX domain in the interval 382–458; sequence ERYPKVALRV…NLFPAALVHF (77 aa). Phosphoserine is present on S496. Positions 496–550 are disordered; the sequence is SPPLLPAPDPVSLESEPIAEDGALGPPEPIQGTAQPVKRSLGKVPKWLKLPASKR.

As to quaternary structure, interacts with VCP. Interacts with VCPKMT. Interacts with GLUT4. As to expression, ubiquitous.

The protein resides in the endomembrane system. It is found in the endoplasmic reticulum-Golgi intermediate compartment membrane. It localises to the cytoplasm. Its subcellular location is the nucleus. Its function is as follows. Enhances VCP methylation catalyzed by VCPKMT. Tethering protein that sequesters GLUT4-containing vesicles in the cytoplasm in the absence of insulin. Modulates the amount of GLUT4 that is available at the cell surface. The protein is Tether containing UBX domain for GLUT4 (Aspscr1) of Mus musculus (Mouse).